A 74-amino-acid polypeptide reads, in one-letter code: Anionic peptide clone 9 (74 aa).

The signal sequence occupies residues 1–24 (MVSKSLIVLLLVSVLVSTFFTTEA).

This sequence belongs to the non-disulfide-bridged peptide (NDBP) superfamily. Long chain multifunctional peptide (group 2) family. Expressed by the venom gland.

Its subcellular location is the secreted. In terms of biological role, may be an antimicrobial peptide. The protein is Anionic peptide clone 9 of Tityus costatus (Brazilian scorpion).